A 366-amino-acid chain; its full sequence is Alanine racemase (366 aa).

The active-site Proton acceptor; specific for D-alanine is Lys33. The residue at position 33 (Lys33) is an N6-(pyridoxal phosphate)lysine. Residue Arg129 coordinates substrate. Tyr253 acts as the Proton acceptor; specific for L-alanine in catalysis. Met301 lines the substrate pocket.

The protein belongs to the alanine racemase family. The cofactor is pyridoxal 5'-phosphate.

It carries out the reaction L-alanine = D-alanine. It participates in amino-acid biosynthesis; D-alanine biosynthesis; D-alanine from L-alanine: step 1/1. Catalyzes the interconversion of L-alanine and D-alanine. May also act on other amino acids. The polypeptide is Alanine racemase (alr) (Xanthomonas oryzae pv. oryzae (strain MAFF 311018)).